The chain runs to 311 residues: tRNA dimethylallyltransferase (311 aa).

11-18 is an ATP binding site; sequence GPTASGKS. 13–18 contacts substrate; the sequence is TASGKS. Interaction with substrate tRNA stretches follow at residues 36–39 and 160–164; these read DSMQ and QRLIR.

Belongs to the IPP transferase family. In terms of assembly, monomer. The cofactor is Mg(2+).

The enzyme catalyses adenosine(37) in tRNA + dimethylallyl diphosphate = N(6)-dimethylallyladenosine(37) in tRNA + diphosphate. Catalyzes the transfer of a dimethylallyl group onto the adenine at position 37 in tRNAs that read codons beginning with uridine, leading to the formation of N6-(dimethylallyl)adenosine (i(6)A). The protein is tRNA dimethylallyltransferase of Rickettsia typhi (strain ATCC VR-144 / Wilmington).